A 479-amino-acid polypeptide reads, in one-letter code: Monodictyphenone cluster transcriptional coactivator mdpA (479 aa).

The HTH iclR-type domain occupies Leu-77–Leu-147. Residues Ile-107–Arg-126 constitute a DNA-binding region (H-T-H motif). 2 disordered regions span residues Gly-281–Asp-305 and Thr-314–Ser-333. Positions His-289 to Pro-298 are enriched in pro residues. Residues Thr-314–His-323 are compositionally biased toward low complexity.

The protein localises to the nucleus. Its function is as follows. Transcriptional coactivator; part of the gene cluster that mediates the biosynthesis of monodictyphenone, a prenyl xanthone derivative. With mdpE, coregulates the production of monodictyphenone. The chain is Monodictyphenone cluster transcriptional coactivator mdpA from Emericella nidulans (strain FGSC A4 / ATCC 38163 / CBS 112.46 / NRRL 194 / M139) (Aspergillus nidulans).